A 510-amino-acid chain; its full sequence is Putative glycerol-3-phosphate transporter 3 (510 aa).

12 consecutive transmembrane segments (helical) span residues L31 to F51, A91 to A111, F123 to W143, L158 to F178, V185 to A205, F217 to V237, V279 to F299, G331 to F351, L355 to L375, I378 to V398, T436 to W456, and V459 to I479.

Belongs to the major facilitator superfamily. Organophosphate:Pi antiporter (OPA) (TC 2.A.1.4) family.

It localises to the membrane. The protein is Putative glycerol-3-phosphate transporter 3 of Arabidopsis thaliana (Mouse-ear cress).